The sequence spans 20 residues: Styelin-A (20 aa).

Hemocytes and pharyngeal tissues.

It localises to the secreted. In terms of biological role, bactericidal against several Gram-positive and Gram-negative bacteria. The sequence is that of Styelin-A from Styela clava (Sea squirt).